Consider the following 188-residue polypeptide: Elongation factor P (188 aa).

Belongs to the elongation factor P family.

The protein resides in the cytoplasm. It participates in protein biosynthesis; polypeptide chain elongation. Involved in peptide bond synthesis. Stimulates efficient translation and peptide-bond synthesis on native or reconstituted 70S ribosomes in vitro. Probably functions indirectly by altering the affinity of the ribosome for aminoacyl-tRNA, thus increasing their reactivity as acceptors for peptidyl transferase. This Flavobacterium johnsoniae (strain ATCC 17061 / DSM 2064 / JCM 8514 / BCRC 14874 / CCUG 350202 / NBRC 14942 / NCIMB 11054 / UW101) (Cytophaga johnsonae) protein is Elongation factor P.